The following is a 73-amino-acid chain: Large ribosomal subunit protein bL31 (73 aa).

Belongs to the bacterial ribosomal protein bL31 family. Type A subfamily. Part of the 50S ribosomal subunit.

Its function is as follows. Binds the 23S rRNA. This Sinorhizobium fredii (strain NBRC 101917 / NGR234) protein is Large ribosomal subunit protein bL31.